A 275-amino-acid chain; its full sequence is Vitamin B12-binding protein (275 aa).

Positions 1-19 are cleaved as a signal peptide; the sequence is MMNKLCFALPLIFSDASFA. The 248-residue stretch at 25–272 folds into the Fe/B12 periplasmic-binding domain; sequence RIISLAPHST…EVCEHFETVR (248 aa). Cys-185 and Cys-265 are disulfide-bonded.

Belongs to the BtuF family. In terms of assembly, the complex is composed of two ATP-binding proteins (BtuD), two transmembrane proteins (BtuC) and a solute-binding protein (BtuF).

Its subcellular location is the periplasm. Functionally, part of the ABC transporter complex BtuCDF involved in vitamin B12 import. Binds vitamin B12 and delivers it to the periplasmic surface of BtuC. The sequence is that of Vitamin B12-binding protein from Vibrio campbellii (strain ATCC BAA-1116).